Reading from the N-terminus, the 160-residue chain is MGVYLAVLFSLLVIEMAILFILVLPLPQRMRRWLYIRYSIISTNKKFRTYMVGIMIFVGLLFIDSWKRSQIRVSTYRNQKNPYIINSVTPVDALASRAYNQRNVYISGFIIYFYICILTVMSILRRIVEWNDKMKAGDDILKEKLRRKQKYLEELQKKKF.

Over 1–2 (MG) the chain is Lumenal. The chain crosses the membrane as a helical span at residues 3-23 (VYLAVLFSLLVIEMAILFILV). At 24–45 (LPLPQRMRRWLYIRYSIISTNK) the chain is on the cytoplasmic side. The helical transmembrane segment at 46 to 66 (KFRTYMVGIMIFVGLLFIDSW) threads the bilayer. The Lumenal portion of the chain corresponds to 67-103 (KRSQIRVSTYRNQKNPYIINSVTPVDALASRAYNQRN). Residues 104–124 (VYISGFIIYFYICILTVMSIL) traverse the membrane as a helical segment. Residues 125–160 (RRIVEWNDKMKAGDDILKEKLRRKQKYLEELQKKKF) lie on the Cytoplasmic side of the membrane. Residues 157–160 (KKKF) carry the Di-lysine motif motif.

This sequence belongs to the BCAP29/BCAP31 family.

Its subcellular location is the endoplasmic reticulum membrane. In terms of biological role, may play a role in anterograde transport of membrane proteins from the endoplasmic reticulum to the Golgi. The polypeptide is Endoplasmic reticulum transmembrane protein 2 (YET2) (Saccharomyces cerevisiae (strain ATCC 204508 / S288c) (Baker's yeast)).